A 353-amino-acid polypeptide reads, in one-letter code: MCALRYLRPDLLHLKPYDAVPPQAADKLDANEFPWDWPVGFKQKLSLLWEKGIPSNRYPDAHHQGLKQAIAAYAGADPAQISLGNGSDELIRSLLIATCVGERGSVLVAEPTFSMYAILAQSLGIPVVRVPRHPETFALDLGRCQQAVAEQRVRVVCLVDPNSPTGNGLSTAEWEWVEGLPAEILVILDEAYFEFSQHTALPKLAEHPNWVILRTFSKAFRLAAHRVGYAIGHPQLIQVLDSIRLPYNLSAISQWAVQIALEHAEEFLADLPLIRQERDALYQALQELPGVRVWPSQANFLYFRVAGWDPQDLQRAWQELGTCVRCTGGGLRLTVGTPEENQRALERLRQILR.

N6-(pyridoxal phosphate)lysine is present on Lys218.

Belongs to the class-II pyridoxal-phosphate-dependent aminotransferase family. Histidinol-phosphate aminotransferase subfamily. Homodimer. Pyridoxal 5'-phosphate is required as a cofactor.

It carries out the reaction L-histidinol phosphate + 2-oxoglutarate = 3-(imidazol-4-yl)-2-oxopropyl phosphate + L-glutamate. It participates in amino-acid biosynthesis; L-histidine biosynthesis; L-histidine from 5-phospho-alpha-D-ribose 1-diphosphate: step 7/9. The protein is Histidinol-phosphate aminotransferase of Synechococcus sp. (strain JA-3-3Ab) (Cyanobacteria bacterium Yellowstone A-Prime).